The primary structure comprises 167 residues: MKERLPHEKGFHVSWDQIHRDSRALAWRLDGQGPDNGSWRAVVGITRGGLVPAMIVSRELDIRTVDTISVKSYNWQEQQAPTVIKAPQAELMGDGHGILIVDDLVDSGKTLELVRTLYPRAHFATVYAKPSGRPMVDTYITEVSQDTWIFFPWDMALQYVEPYRGRD.

Residues 47–48 (RG), Gln-79, and 102–110 (DDLVDSGKT) contribute to the 5-phospho-alpha-D-ribose 1-diphosphate site. Gln-79 serves as a coordination point for GMP. A Mg(2+)-binding site is contributed by Asp-103. Residues Asp-106 and Ile-149 each coordinate guanine. Residues Asp-106 and Ile-149 each contribute to the xanthine site. GMP contacts are provided by residues 106–110 (DSGKT) and 148–149 (WI).

It belongs to the purine/pyrimidine phosphoribosyltransferase family. XGPT subfamily. As to quaternary structure, homotetramer. Mg(2+) serves as cofactor.

It is found in the cell inner membrane. It catalyses the reaction GMP + diphosphate = guanine + 5-phospho-alpha-D-ribose 1-diphosphate. The catalysed reaction is XMP + diphosphate = xanthine + 5-phospho-alpha-D-ribose 1-diphosphate. It carries out the reaction IMP + diphosphate = hypoxanthine + 5-phospho-alpha-D-ribose 1-diphosphate. Its pathway is purine metabolism; GMP biosynthesis via salvage pathway; GMP from guanine: step 1/1. It participates in purine metabolism; XMP biosynthesis via salvage pathway; XMP from xanthine: step 1/1. Purine salvage pathway enzyme that catalyzes the transfer of the ribosyl-5-phosphate group from 5-phospho-alpha-D-ribose 1-diphosphate (PRPP) to the N9 position of the 6-oxopurines guanine and xanthine to form the corresponding ribonucleotides GMP (guanosine 5'-monophosphate) and XMP (xanthosine 5'-monophosphate), with the release of PPi. To a lesser extent, also acts on hypoxanthine. This is Xanthine-guanine phosphoribosyltransferase from Cereibacter sphaeroides (strain ATCC 17029 / ATH 2.4.9) (Rhodobacter sphaeroides).